A 245-amino-acid polypeptide reads, in one-letter code: MLKTSIPSQGIQQNPLVCQLANSIEAVWQRYLNLEPYYLPADLGYVEGRLEGEKLIIQNKCYQTAQFRKLHLELATIGPKLDILHCVMFPRISYPLPIFGTDLVGARGQISAAVVDISPQSQDRKLPEVYNYQLQALPIKEFAHPRQLPQWGEIFSEFCLFIRPTGLEEEQKFISIVESYLEIHCQQAIAQKPVSPEQQLEILKAQHHYCTQQRQNDKTRRVLEKAFGPEWTDYYLTTVLFDSPN.

The protein belongs to the HY2 family.

The catalysed reaction is (2R,3Z)-phycocyanobilin + 4 oxidized [2Fe-2S]-[ferredoxin] = biliverdin IXalpha + 4 reduced [2Fe-2S]-[ferredoxin] + 4 H(+). Its function is as follows. Catalyzes the four-electron reduction of biliverdin IX-alpha (2-electron reduction at both the A and D rings); the reaction proceeds via an isolatable 2-electron intermediate, 181,182-dihydrobiliverdin. This is Phycocyanobilin:ferredoxin oxidoreductase from Trichodesmium erythraeum (strain IMS101).